The chain runs to 24 residues: Caerin-2.1 (24 aa).

It belongs to the frog skin active peptide (FSAP) family. Caerin subfamily. In terms of tissue distribution, expressed by the skin dorsal glands.

It localises to the secreted. Functionally, inhibits the formation of NO by neuronal nitric oxide synthase. This is Caerin-2.1 from Litoria rothii (Roth's tree frog).